Consider the following 283-residue polypeptide: 2-dehydro-3-deoxyphosphooctonate aldolase (283 aa).

Belongs to the KdsA family.

The protein resides in the cytoplasm. The catalysed reaction is D-arabinose 5-phosphate + phosphoenolpyruvate + H2O = 3-deoxy-alpha-D-manno-2-octulosonate-8-phosphate + phosphate. It functions in the pathway carbohydrate biosynthesis; 3-deoxy-D-manno-octulosonate biosynthesis; 3-deoxy-D-manno-octulosonate from D-ribulose 5-phosphate: step 2/3. The protein operates within bacterial outer membrane biogenesis; lipopolysaccharide biosynthesis. This chain is 2-dehydro-3-deoxyphosphooctonate aldolase, found in Parasynechococcus marenigrum (strain WH8102).